The sequence spans 1232 residues: Histone-lysine N-methyltransferase MECOM (1232 aa).

The tract at residues P22–A68 is disordered. Residues P25–A34 show a composition bias toward acidic residues. The region spanning D80–K192 is the SET domain. Glycyl lysine isopeptide (Lys-Gly) (interchain with G-Cter in SUMO2) cross-links involve residues K101 and K192. The interaction with SUV39H1 and probably MAPK9 and SMAD3 stretch occupies residues M191 to G442. C2H2-type zinc fingers lie at residues H211–H238, Q265–H287, Y293–H315, Y321–H344, and H350–H372. Residue K294 forms a Glycyl lysine isopeptide (Lys-Gly) (interchain with G-Cter in SUMO2) linkage. Glycyl lysine isopeptide (Lys-Gly) (interchain with G-Cter in SUMO2) cross-links involve residues K369 and K376. The C2H2-type 6 zinc-finger motif lies at F378 to H400. The C2H2-type 7; atypical zinc-finger motif lies at I407–C429. Residues K432, K525, K545, K549, and K557 each participate in a glycyl lysine isopeptide (Lys-Gly) (interchain with G-Cter in SUMO2) cross-link. The disordered stretch occupies residues S548–K622. Residues L562–D577 are compositionally biased toward basic and acidic residues. Polar residues predominate over residues S588 to G600. A compositionally biased stretch (basic and acidic residues) spans E608–K622. Residues K611 to K624 carry the Nuclear localization signal motif. K624 is covalently cross-linked (Glycyl lysine isopeptide (Lys-Gly) (interchain with G-Cter in SUMO2)). At S626 the chain carries Phosphoserine. Glycyl lysine isopeptide (Lys-Gly) (interchain with G-Cter in SUMO2) cross-links involve residues K637, K665, K687, and K723. Residues L720–T823 are disordered. S728 is subject to Phosphoserine. Glycyl lysine isopeptide (Lys-Gly) (interchain with G-Cter in SUMO2) cross-links involve residues K733, K734, and K737. S742 is subject to Phosphoserine. The short motif at P743–T747 is the CTBP-binding motif 1 element. Glycyl lysine isopeptide (Lys-Gly) (interchain with G-Cter in SUMO2) cross-links involve residues K751, K754, and K762. The span at S758–Q773 shows a compositional bias: polar residues. A CTBP-binding motif 2 motif is present at residues P774–S778. Glycyl lysine isopeptide (Lys-Gly) (interchain with G-Cter in SUMO2) cross-links involve residues K789, K802, and K803. A compositionally biased stretch (basic and acidic residues) spans T791–S805. Positions N806–S816 are enriched in polar residues. Residues K837, K846, K848, and K879 each participate in a glycyl lysine isopeptide (Lys-Gly) (interchain with G-Cter in SUMO2) cross-link. C2H2-type zinc fingers lie at residues Y914–H936, Y942–H965, and F971–H993. K1020 participates in a covalent cross-link: Glycyl lysine isopeptide (Lys-Gly) (interchain with G-Cter in SUMO2). The segment covering I1032 to R1043 has biased composition (polar residues). Positions I1032–P1107 are disordered. 2 positions are modified to phosphoserine: S1039 and S1041. The segment covering N1044–A1059 has biased composition (basic and acidic residues). Residues K1055 and K1058 each participate in a glycyl lysine isopeptide (Lys-Gly) (interchain with G-Cter in SUMO2) cross-link. The span at L1068 to D1088 shows a compositional bias: acidic residues. Over residues I1089–E1104 the composition is skewed to basic and acidic residues. Glycyl lysine isopeptide (Lys-Gly) (interchain with G-Cter in SUMO2) cross-links involve residues K1122, K1129, K1134, K1151, K1178, and K1186.

In terms of assembly, homooligomer. Interacts with CTBP1. Interacts with SMAD3 (via MH2 domain); the interaction is direct. Interacts with SMAD4; through interaction with SMAD3. Interacts with CREBBP, KAT2B and histone deacetylases. Interacts with MAPK8 and MAPK9; inhibits JNK signaling. Interacts with SUV39H1 (via SET domain); enhances MECOM transcriptional repression activity. In terms of processing, may be acetylated by CREBBP and KAT2B.

The protein localises to the nucleus. Its subcellular location is the nucleus speckle. It is found in the cytoplasm. It carries out the reaction L-lysyl(9)-[histone H3] + S-adenosyl-L-methionine = N(6)-methyl-L-lysyl(9)-[histone H3] + S-adenosyl-L-homocysteine + H(+). Functions as a transcriptional regulator binding to DNA sequences in the promoter region of target genes and regulating positively or negatively their expression. Oncogene which plays a role in development, cell proliferation and differentiation. May also play a role in apoptosis through regulation of the JNK and TGF-beta signaling. Involved in hematopoiesis. Functionally, displays histone methyltransferase activity and monomethylates 'Lys-9' of histone H3 (H3K9me1) in vitro. Probably catalyzes the monomethylation of free histone H3 in the cytoplasm which is then transported to the nucleus and incorporated into nucleosomes where SUV39H methyltransferases use it as a substrate to catalyze histone H3 'Lys-9' trimethylation. Likely to be one of the primary histone methyltransferases along with PRDM16 that direct cytoplasmic H3K9me1 methylation. The protein is Histone-lysine N-methyltransferase MECOM of Mus musculus (Mouse).